Reading from the N-terminus, the 276-residue chain is MTLIDNAAGLGLRRGLLPQLLAMAPGAVDFLECAPDNWIGVGGAFGADLERLVERIPLTCHGLSLSLGGSTPLDAAFIEQTRRFLVRHRVALYSEHLSYCSDDGHLYDLLPLPFTEAAVRHVAARIREAQERLERRIAVENISYYAAPYREMSEIEFVNAVLDEADCDLLLDVNNLFVNACNHGYDALDFLVRLPPGRVAAYHVAGHYDEAPDLKIDTHGAAVKPGVWALLGAAYRRFGVRPTLLERDFNYPPLGELLLEVEQIRQWQRDEGRRHG.

It belongs to the UPF0276 family.

This is UPF0276 protein PA4106 from Pseudomonas aeruginosa (strain ATCC 15692 / DSM 22644 / CIP 104116 / JCM 14847 / LMG 12228 / 1C / PRS 101 / PAO1).